A 186-amino-acid polypeptide reads, in one-letter code: Transcription factor HES-3 (186 aa).

In terms of domain architecture, bHLH spans 1–49 (MEKKRRARINVSLEQLKSLLEKHYSHQIRKRKLEKADILELSVKYMRSL). The region spanning 65 to 99 (QPSGFRSCLPGVSQLLRRGDEVGSGLRCPLVPESA) is the Orange domain. The disordered stretch occupies residues 128–186 (APAAGGPRSPPPLLLLPESLPGSSASVPPPQPASSRCAESPGLGLRVWRPWGSPGDDLN). Low complexity predominate over residues 142–153 (LLPESLPGSSAS). The WRPW motif motif lies at 175-178 (WRPW).

In terms of assembly, transcription repression requires formation of a complex with a corepressor protein of the Groucho/TLE family.

It localises to the nucleus. In terms of biological role, transcriptional repressor of genes that require a bHLH protein for their transcription. The polypeptide is Transcription factor HES-3 (HES3) (Homo sapiens (Human)).